The chain runs to 170 residues: Large ribosomal subunit protein uL5 (170 aa).

This sequence belongs to the universal ribosomal protein uL5 family. As to quaternary structure, part of the 50S ribosomal subunit; contacts the 5S rRNA and probably tRNA. Forms a bridge to the 30S subunit in the 70S ribosome.

Its function is as follows. This is one of the proteins that bind and probably mediate the attachment of the 5S RNA into the large ribosomal subunit, where it forms part of the central protuberance. In the 70S ribosome it contacts protein S13 of the 30S subunit (bridge B1b), connecting the 2 subunits; this bridge is implicated in subunit movement. May contact the P site tRNA; the 5S rRNA and some of its associated proteins might help stabilize positioning of ribosome-bound tRNAs. This is Large ribosomal subunit protein uL5 from Thermoplasma volcanium (strain ATCC 51530 / DSM 4299 / JCM 9571 / NBRC 15438 / GSS1).